The following is a 161-amino-acid chain: Large ribosomal subunit protein uL15 (161 aa).

The interval 1-43 (MKLSDIADNAGARKKRMRVGRGIGSGKGKTSGRGGKGQTARSG) is disordered. Over residues 21 to 37 (RGIGSGKGKTSGRGGKG) the composition is skewed to gly residues.

The protein belongs to the universal ribosomal protein uL15 family. In terms of assembly, part of the 50S ribosomal subunit.

In terms of biological role, binds to the 23S rRNA. This is Large ribosomal subunit protein uL15 from Bradyrhizobium sp. (strain BTAi1 / ATCC BAA-1182).